Consider the following 88-residue polypeptide: Large ribosomal subunit protein uL29 (88 aa).

Belongs to the universal ribosomal protein uL29 family.

The sequence is that of Large ribosomal subunit protein uL29 (rpl29) from Sulfurisphaera tokodaii (strain DSM 16993 / JCM 10545 / NBRC 100140 / 7) (Sulfolobus tokodaii).